The following is a 301-amino-acid chain: GTPase Era (301 aa).

Positions 7–175 constitute an Era-type G domain; it reads YCGFIAIVGR…ASIVRKHLPE (169 aa). Residues 15 to 22 are G1; that stretch reads GRPNVGKS. 15–22 provides a ligand contact to GTP; sequence GRPNVGKS. The segment at 41 to 45 is G2; it reads QTTRH. Residues 62–65 are G3; sequence DTPG. GTP is bound by residues 62-66 and 124-127; these read DTPGL and NKVD. The segment at 124–127 is G4; the sequence is NKVD. A G5 region spans residues 154-156; that stretch reads ISA. One can recognise a KH type-2 domain in the interval 206–283; sequence LGAELPYSVT…HLELWVKVKS (78 aa).

Belongs to the TRAFAC class TrmE-Era-EngA-EngB-Septin-like GTPase superfamily. Era GTPase family. In terms of assembly, monomer.

Its subcellular location is the cytoplasm. The protein localises to the cell inner membrane. Functionally, an essential GTPase that binds both GDP and GTP, with rapid nucleotide exchange. Plays a role in 16S rRNA processing and 30S ribosomal subunit biogenesis and possibly also in cell cycle regulation and energy metabolism. This Salmonella arizonae (strain ATCC BAA-731 / CDC346-86 / RSK2980) protein is GTPase Era.